The chain runs to 148 residues: MLVKTISRTIESESGFLQPTLDVIATLPADDRSKKIPISLVVGFKQEASLNSSSSLSCYYYAIPLMRDRHINLKSGGSNVVGIPLLDTKDDRIRDMARHMATIISERFNRPCYVTWSSLPSEDPSMLVANHLYILKKCLDLLKTELGE.

This sequence belongs to the PSMG4 family. Component of the 20S proteasome chaperone. Forms a heterodimer with IRC25 that binds to proteasome precursors. Interacts with POP2.

The protein resides in the cytoplasm. Functionally, involved in 20S proteasome assembly, facilitating the alpha-ring formation. Involved in maintenance of telomere length. This chain is Proteasome chaperone 4 (POC4), found in Saccharomyces cerevisiae (strain ATCC 204508 / S288c) (Baker's yeast).